The chain runs to 326 residues: o-succinylbenzoate synthase (326 aa).

Catalysis depends on K110, which acts as the Proton donor. D138, E165, and D188 together coordinate Mg(2+). Catalysis depends on K212, which acts as the Proton acceptor.

It belongs to the mandelate racemase/muconate lactonizing enzyme family. MenC type 1 subfamily. A divalent metal cation is required as a cofactor.

The enzyme catalyses (1R,6R)-6-hydroxy-2-succinyl-cyclohexa-2,4-diene-1-carboxylate = 2-succinylbenzoate + H2O. It functions in the pathway quinol/quinone metabolism; 1,4-dihydroxy-2-naphthoate biosynthesis; 1,4-dihydroxy-2-naphthoate from chorismate: step 4/7. Its pathway is quinol/quinone metabolism; menaquinone biosynthesis. In terms of biological role, converts 2-succinyl-6-hydroxy-2,4-cyclohexadiene-1-carboxylate (SHCHC) to 2-succinylbenzoate (OSB). The protein is o-succinylbenzoate synthase of Mycobacterium bovis (strain ATCC BAA-935 / AF2122/97).